We begin with the raw amino-acid sequence, 431 residues long: Histidinol dehydrogenase (431 aa).

3 residues coordinate NAD(+): Tyr127, Gln185, and Asn208. Ser234, Gln256, and His259 together coordinate substrate. Positions 256 and 259 each coordinate Zn(2+). Active-site proton acceptor residues include Glu323 and His324. His324, Asp357, Glu411, and His416 together coordinate substrate. Asp357 lines the Zn(2+) pocket. Residue His416 participates in Zn(2+) binding.

Belongs to the histidinol dehydrogenase family. Zn(2+) serves as cofactor.

It catalyses the reaction L-histidinol + 2 NAD(+) + H2O = L-histidine + 2 NADH + 3 H(+). The protein operates within amino-acid biosynthesis; L-histidine biosynthesis; L-histidine from 5-phospho-alpha-D-ribose 1-diphosphate: step 9/9. Catalyzes the sequential NAD-dependent oxidations of L-histidinol to L-histidinaldehyde and then to L-histidine. In Vibrio parahaemolyticus serotype O3:K6 (strain RIMD 2210633), this protein is Histidinol dehydrogenase.